The chain runs to 411 residues: Serine/threonine transporter SstT (411 aa).

8 helical membrane passes run 17 to 37 (IMVG…TASA), 41 to 61 (LGAL…LVLV), 79 to 99 (ILFL…VVSF), 138 to 158 (ALIS…GLAL), 189 to 209 (LGIF…ALWG), 214 to 234 (LVVL…LIVF), 295 to 315 (MAGA…TLGI), and 327 to 347 (VVAA…LLLI).

This sequence belongs to the dicarboxylate/amino acid:cation symporter (DAACS) (TC 2.A.23) family.

Its subcellular location is the cell inner membrane. The enzyme catalyses L-serine(in) + Na(+)(in) = L-serine(out) + Na(+)(out). It catalyses the reaction L-threonine(in) + Na(+)(in) = L-threonine(out) + Na(+)(out). Its function is as follows. Involved in the import of serine and threonine into the cell, with the concomitant import of sodium (symport system). The polypeptide is Serine/threonine transporter SstT (Serratia proteamaculans (strain 568)).